We begin with the raw amino-acid sequence, 352 residues long: Molybdenum import ATP-binding protein ModC (352 aa).

Residues 1-229 (MLELNFSQTL…SVMNPWLPKE (229 aa)) enclose the ABC transporter domain. 31-38 (GVSGAGKT) provides a ligand contact to ATP. A Mop domain is found at 289 to 352 (QTSIRNVLRA…AQIKSVSITA (64 aa)).

The protein belongs to the ABC transporter superfamily. Molybdate importer (TC 3.A.1.8) family. In terms of assembly, the complex is composed of two ATP-binding proteins (ModC), two transmembrane proteins (ModB) and a solute-binding protein (ModA).

It is found in the cell inner membrane. The catalysed reaction is molybdate(out) + ATP + H2O = molybdate(in) + ADP + phosphate + H(+). In terms of biological role, part of the ABC transporter complex ModABC involved in molybdenum import. Responsible for energy coupling to the transport system. This is Molybdenum import ATP-binding protein ModC from Escherichia coli O6:K15:H31 (strain 536 / UPEC).